We begin with the raw amino-acid sequence, 152 residues long: Aspartate carbamoyltransferase regulatory chain (152 aa).

Positions 109, 114, 138, and 141 each coordinate Zn(2+).

This sequence belongs to the PyrI family. As to quaternary structure, contains catalytic and regulatory chains. It depends on Zn(2+) as a cofactor.

In terms of biological role, involved in allosteric regulation of aspartate carbamoyltransferase. This chain is Aspartate carbamoyltransferase regulatory chain, found in Proteus mirabilis (strain HI4320).